A 396-amino-acid polypeptide reads, in one-letter code: Ribose-phosphate pyrophosphokinase 1, chloroplastic (396 aa).

Residues 1–36 constitute a chloroplast transit peptide; it reads MPLSYSAAAAAAPSPLAARSRGLLRRPPRSSPVVVR. The Mg(2+) site is built by D204, H206, D215, and D219. The segment at 290–305 is binding of phosphoribosylpyrophosphate; that stretch reads GKVAVMMDDMIDTAGT.

It belongs to the ribose-phosphate pyrophosphokinase family. Requires Mg(2+) as cofactor.

Its subcellular location is the plastid. The protein localises to the chloroplast. The enzyme catalyses D-ribose 5-phosphate + ATP = 5-phospho-alpha-D-ribose 1-diphosphate + AMP + H(+). This Oryza sativa subsp. japonica (Rice) protein is Ribose-phosphate pyrophosphokinase 1, chloroplastic.